We begin with the raw amino-acid sequence, 157 residues long: uncharacterized protein (157 aa).

This is an uncharacterized protein from Bacillus subtilis (strain 168).